Consider the following 179-residue polypeptide: tRNA (cytidine(56)-2'-O)-methyltransferase (179 aa).

S-adenosyl-L-methionine contacts are provided by residues Leu82, 112 to 116 (GAEKV), and 130 to 137 (VGNQPHSE).

This sequence belongs to the aTrm56 family. Homodimer.

It is found in the cytoplasm. The catalysed reaction is cytidine(56) in tRNA + S-adenosyl-L-methionine = 2'-O-methylcytidine(56) in tRNA + S-adenosyl-L-homocysteine + H(+). In terms of biological role, specifically catalyzes the AdoMet-dependent 2'-O-ribose methylation of cytidine at position 56 in tRNAs. In Methanococcus maripaludis (strain C7 / ATCC BAA-1331), this protein is tRNA (cytidine(56)-2'-O)-methyltransferase.